Consider the following 178-residue polypeptide: Gamma-crystallin M1 (178 aa).

Beta/gamma crystallin 'Greek key' domains are found at residues 2 to 40 and 41 to 86; these read GKII…RVES and GCFM…RMIP. The interval 87 to 91 is connecting peptide; the sequence is PYRGS. 2 consecutive Beta/gamma crystallin 'Greek key' domains span residues 92 to 132 and 133 to 175; these read YRMR…HVMD and GHWL…RRIT.

Belongs to the beta/gamma-crystallin family. Monomer.

Its function is as follows. Crystallins are the dominant structural components of the vertebrate eye lens. In Cyprinus carpio (Common carp), this protein is Gamma-crystallin M1.